The following is a 158-amino-acid chain: Putative ribosomal RNA large subunit methyltransferase H (158 aa).

Residues leucine 76, glycine 107, and 126–131 (LSRMTF) each bind S-adenosyl-L-methionine.

This sequence belongs to the RNA methyltransferase RlmH family.

It is found in the cytoplasm. The catalysed reaction is pseudouridine(1915) in 23S rRNA + S-adenosyl-L-methionine = N(3)-methylpseudouridine(1915) in 23S rRNA + S-adenosyl-L-homocysteine + H(+). Its function is as follows. Specifically methylates the pseudouridine at position 1915 (m3Psi1915) in 23S rRNA. This chain is Putative ribosomal RNA large subunit methyltransferase H, found in Methanocorpusculum labreanum (strain ATCC 43576 / DSM 4855 / Z).